We begin with the raw amino-acid sequence, 115 residues long: Large ribosomal subunit protein bL19 (115 aa).

This sequence belongs to the bacterial ribosomal protein bL19 family.

Functionally, this protein is located at the 30S-50S ribosomal subunit interface and may play a role in the structure and function of the aminoacyl-tRNA binding site. The chain is Large ribosomal subunit protein bL19 from Streptococcus pneumoniae serotype 2 (strain D39 / NCTC 7466).